Reading from the N-terminus, the 275-residue chain is Dermonecrotic toxin LspiSicTox-betaIE4i (275 aa).

2 residues coordinate Mg(2+): Glu24 and Asp26. His40 functions as the Nucleophile in the catalytic mechanism. 2 disulfides stabilise this stretch: Cys44/Cys50 and Cys46/Cys188. Asp84 is a binding site for Mg(2+).

Belongs to the arthropod phospholipase D family. Class II subfamily. Requires Mg(2+) as cofactor. In terms of tissue distribution, expressed by the venom gland.

The protein resides in the secreted. It carries out the reaction an N-(acyl)-sphingosylphosphocholine = an N-(acyl)-sphingosyl-1,3-cyclic phosphate + choline. The enzyme catalyses an N-(acyl)-sphingosylphosphoethanolamine = an N-(acyl)-sphingosyl-1,3-cyclic phosphate + ethanolamine. The catalysed reaction is a 1-acyl-sn-glycero-3-phosphocholine = a 1-acyl-sn-glycero-2,3-cyclic phosphate + choline. It catalyses the reaction a 1-acyl-sn-glycero-3-phosphoethanolamine = a 1-acyl-sn-glycero-2,3-cyclic phosphate + ethanolamine. Dermonecrotic toxins cleave the phosphodiester linkage between the phosphate and headgroup of certain phospholipids (sphingolipid and lysolipid substrates), forming an alcohol (often choline) and a cyclic phosphate. This toxin acts on sphingomyelin (SM). It may also act on ceramide phosphoethanolamine (CPE), lysophosphatidylcholine (LPC) and lysophosphatidylethanolamine (LPE), but not on lysophosphatidylserine (LPS), and lysophosphatidylglycerol (LPG). It acts by transphosphatidylation, releasing exclusively cyclic phosphate products as second products. Induces dermonecrosis, hemolysis, increased vascular permeability, edema, inflammatory response, and platelet aggregation. This chain is Dermonecrotic toxin LspiSicTox-betaIE4i, found in Loxosceles spinulosa (Recluse spider).